We begin with the raw amino-acid sequence, 46 residues long: Photosystem II reaction center protein K (46 aa).

The propeptide occupies 1-9; the sequence is MIDALVLVA. Residues 10–19 are Lumenal-facing; sequence KLPEAYAIFD. Residues 20-39 traverse the membrane as a helical segment; the sequence is PLVDVLPVIPVLFLALAFVW. At 40 to 46 the chain is on the cytoplasmic side; it reads QAAVGFR.

Belongs to the PsbK family. In terms of assembly, PSII is composed of 1 copy each of membrane proteins PsbA, PsbB, PsbC, PsbD, PsbE, PsbF, PsbH, PsbI, PsbJ, PsbK, PsbL, PsbM, PsbT, PsbX, PsbY, PsbZ, Psb30/Ycf12, peripheral proteins PsbO, CyanoQ(PsbQ), PsbU, PsbV and a large number of cofactors. It forms dimeric complexes. Part of a photosystem II (PSII) assembly intermediate complex PSII-I; crystallized from a strain deleted of psbJ, it forms monomeric PSII before addition of the oxygen evolving complex. PSII-I includes 3 assembly factors not found in mature PSII (Psb27, Psb28 and Psb34). PSII binds multiple chlorophylls, carotenoids and specific lipids. serves as cofactor.

The protein resides in the cellular thylakoid membrane. In terms of biological role, one of the components of the core complex of photosystem II (PSII). PSII is a light-driven water:plastoquinone oxidoreductase that uses light energy to abstract electrons from H(2)O, generating O(2) and a proton gradient subsequently used for ATP formation. It consists of a core antenna complex that captures photons, and an electron transfer chain that converts photonic excitation into a charge separation. Required for association of PsbZ and Psb30/Ycf12 with PSII. The protein is Photosystem II reaction center protein K of Thermosynechococcus vestitus (strain NIES-2133 / IAM M-273 / BP-1).